Reading from the N-terminus, the 253-residue chain is Phosphoadenosine 5'-phosphosulfate reductase (253 aa).

Cys-239 serves as the catalytic Nucleophile; cysteine thiosulfonate intermediate.

It belongs to the PAPS reductase family. CysH subfamily.

It localises to the cytoplasm. The enzyme catalyses [thioredoxin]-disulfide + sulfite + adenosine 3',5'-bisphosphate + 2 H(+) = [thioredoxin]-dithiol + 3'-phosphoadenylyl sulfate. It participates in sulfur metabolism; hydrogen sulfide biosynthesis; sulfite from sulfate: step 3/3. Its function is as follows. Catalyzes the formation of sulfite from phosphoadenosine 5'-phosphosulfate (PAPS) using thioredoxin as an electron donor. In Aliivibrio fischeri (strain ATCC 700601 / ES114) (Vibrio fischeri), this protein is Phosphoadenosine 5'-phosphosulfate reductase.